Reading from the N-terminus, the 139-residue chain is Ubiquitin-conjugating enzyme spm2 (139 aa).

The region spanning 5–139 (PRNFKLLEEL…PQPPEGSTFF (135 aa)) is the UBC core domain.

Belongs to the ubiquitin-conjugating enzyme family. Heterodimer with ubc13.

Functionally, has a role in the DNA error-free postreplication repair (PRR) pathway. Lacks catalytic activity by itself. The ubc13/spm2 heterodimer catalyzes the synthesis of non-canonical poly-ubiquitin chains that are linked through 'Lys-63'. The chain is Ubiquitin-conjugating enzyme spm2 (spm2) from Schizosaccharomyces pombe (strain 972 / ATCC 24843) (Fission yeast).